Consider the following 277-residue polypeptide: Putative thiosulfate sulfurtransferase (277 aa).

Rhodanese domains follow at residues 18-125 (KAPK…PLSA) and 154-274 (AIGT…APIE). Lys67 participates in a covalent cross-link: Isoglutamyl lysine isopeptide (Lys-Gln) (interchain with Q-Cter in protein Pup). Residue Cys233 is the Cysteine persulfide intermediate of the active site. Residue Arg238 participates in substrate binding.

The catalysed reaction is thiosulfate + hydrogen cyanide = thiocyanate + sulfite + 2 H(+). Functionally, may be a sulfotransferase involved in the formation of thiosulfate. The sequence is that of Putative thiosulfate sulfurtransferase from Mycolicibacterium smegmatis (strain ATCC 700084 / mc(2)155) (Mycobacterium smegmatis).